We begin with the raw amino-acid sequence, 271 residues long: MQAACWYVLLLLQPTIYLVTCANLTNGGKSELLKSGSSKSTLKHIWTESSKDLSISRLLSQTFRGKENDTDLDLRYDTPEPYSEQDLWDWLRNSTDLQEPRPRAKRRPIVKTGKFKKMFGWGDFHSNIKTVKLNLLITGKIVDHGNGTFSVYFRHNSTGQGNVSVSLVPPTKIVEFDLAQQTVIDAKDSKSFNCRIEYEKVDKATKNTLCNYDPSKTCYQEQTQSHVSWLCSKPFKVICIYISFYSTDYKLVQKVCPDYNYHSDTPYFPSG.

An N-terminal signal peptide occupies residues 1–21; that stretch reads MQAACWYVLLLLQPTIYLVTC. The tract at residues 22–97 is II; that stretch reads ANLTNGGKSE…WDWLRNSTDL (76 aa). Asn23, Asn68, Asn93, Asn146, Asn156, and Asn162 each carry an N-linked (GlcNAc...) asparagine glycan. The segment at 98-176 is III; that stretch reads QEPRPRAKRR…LVPPTKIVEF (79 aa). The segment at 177–185 is IV (linker domain); that stretch reads DLAQQTVID. Positions 186–271 are v (Cys-rich); that stretch reads AKDSKSFNCR…HSDTPYFPSG (86 aa).

The protein belongs to the neurexophilin family.

The protein localises to the secreted. May be signaling molecules that resemble neuropeptides and that act by binding to alpha-neurexins and possibly other receptors. In Pongo abelii (Sumatran orangutan), this protein is Neurexophilin-1 (NXPH1).